We begin with the raw amino-acid sequence, 729 residues long: Catalase-peroxidase (729 aa).

Residues 95-218 (WHSAGTYRGA…LAAVEMGLVY (124 aa)) constitute a cross-link (tryptophyl-tyrosyl-methioninium (Trp-Tyr) (with M-244)). The active-site Proton acceptor is H96. The segment at residues 218-244 (YVNPEGPHGHPDPVASGPDVRDTFARM) is a cross-link (tryptophyl-tyrosyl-methioninium (Tyr-Met) (with W-95)). Residue H259 participates in heme b binding.

It belongs to the peroxidase family. Peroxidase/catalase subfamily. As to quaternary structure, homodimer or homotetramer. Heme b is required as a cofactor. Post-translationally, formation of the three residue Trp-Tyr-Met cross-link is important for the catalase, but not the peroxidase activity of the enzyme.

The enzyme catalyses H2O2 + AH2 = A + 2 H2O. It catalyses the reaction 2 H2O2 = O2 + 2 H2O. Bifunctional enzyme with both catalase and broad-spectrum peroxidase activity. The sequence is that of Catalase-peroxidase from Synechococcus sp. (strain CC9605).